The following is a 613-amino-acid chain: Zinc finger protein 665 (613 aa).

18 consecutive C2H2-type zinc fingers follow at residues 113 to 135 (YKCD…KRIH), 141 to 163 (YRCN…QVIH), 169 to 191 (YKCN…QRIH), 197 to 219 (YKCN…QVIH), 225 to 247 (YKCN…RRIH), 253 to 275 (YKCN…QTIH), 281 to 303 (YKCN…RRVH), 309 to 331 (YKCN…QIIH), 337 to 359 (FKCN…RRIH), 365 to 387 (YRCD…QAIH), 393 to 415 (YKCN…RGIH), 421 to 443 (YKCD…WRVH), 449 to 471 (YKCN…QTIH), 477 to 499 (YKCN…QRIH), 505 to 527 (YKCN…QVIH), 533 to 555 (YKCN…RRIH), 561 to 583 (YRCN…MAIH), and 589 to 611 (YKCN…RRIH).

Belongs to the krueppel C2H2-type zinc-finger protein family.

The protein resides in the nucleus. Functionally, may be involved in transcriptional regulation. The sequence is that of Zinc finger protein 665 (ZNF665) from Pongo abelii (Sumatran orangutan).